Reading from the N-terminus, the 324-residue chain is Phospho-N-acetylmuramoyl-pentapeptide-transferase (324 aa).

The next 10 membrane-spanning stretches (helical) occupy residues 5-25 (VILFTILMGFLISVLLSPILI), 50-70 (GTPTMGGVMIILSIIVTTIVM), 77-97 (ISPEMVLLLFVTLGYGLLGFL), 117-137 (LIGQIIIAVVFYAVYHYYNFA), 147-167 (LSFDLGWAYFILVLFMLVGGS), 176-196 (LDGLLSGTAAIAFGAFAILAW), 203-223 (VAIFSVAVVGAVLGFLVFNAH), 227-247 (VFMGDTGSLALGGAIVTIAIL), 250-270 (LEILLVIIGGVFVIETLSVIL), and 302-322 (VVVTFWAAGLLLAVLGIYIEV).

Belongs to the glycosyltransferase 4 family. MraY subfamily. The cofactor is Mg(2+).

The protein resides in the cell membrane. It catalyses the reaction UDP-N-acetyl-alpha-D-muramoyl-L-alanyl-gamma-D-glutamyl-meso-2,6-diaminopimeloyl-D-alanyl-D-alanine + di-trans,octa-cis-undecaprenyl phosphate = di-trans,octa-cis-undecaprenyl diphospho-N-acetyl-alpha-D-muramoyl-L-alanyl-D-glutamyl-meso-2,6-diaminopimeloyl-D-alanyl-D-alanine + UMP. It participates in cell wall biogenesis; peptidoglycan biosynthesis. Catalyzes the initial step of the lipid cycle reactions in the biosynthesis of the cell wall peptidoglycan: transfers peptidoglycan precursor phospho-MurNAc-pentapeptide from UDP-MurNAc-pentapeptide onto the lipid carrier undecaprenyl phosphate, yielding undecaprenyl-pyrophosphoryl-MurNAc-pentapeptide, known as lipid I. The polypeptide is Phospho-N-acetylmuramoyl-pentapeptide-transferase (Bacillus subtilis (strain 168)).